The sequence spans 390 residues: Phosphopentomutase (390 aa).

Residues Asp12, Asp284, His289, Asp325, His326, and His337 each contribute to the Mn(2+) site.

It belongs to the phosphopentomutase family. The cofactor is Mn(2+).

It localises to the cytoplasm. The catalysed reaction is 2-deoxy-alpha-D-ribose 1-phosphate = 2-deoxy-D-ribose 5-phosphate. The enzyme catalyses alpha-D-ribose 1-phosphate = D-ribose 5-phosphate. It participates in carbohydrate degradation; 2-deoxy-D-ribose 1-phosphate degradation; D-glyceraldehyde 3-phosphate and acetaldehyde from 2-deoxy-alpha-D-ribose 1-phosphate: step 1/2. Functionally, isomerase that catalyzes the conversion of deoxy-ribose 1-phosphate (dRib-1-P) and ribose 1-phosphate (Rib-1-P) to deoxy-ribose 5-phosphate (dRib-5-P) and ribose 5-phosphate (Rib-5-P), respectively. The sequence is that of Phosphopentomutase from Macrococcus caseolyticus (strain JCSC5402) (Macrococcoides caseolyticum).